Consider the following 428-residue polypeptide: GTPase Obg (428 aa).

One can recognise an Obg domain in the interval 1–158; that stretch reads MFIDKAKVFI…LSIVLELKLL (158 aa). The 173-residue stretch at 159 to 331 folds into the OBG-type G domain; that stretch reads ADVGLLGFPN…VIKEAARMLK (173 aa). GTP is bound by residues 165–172, 190–194, 212–215, 282–285, and 312–314; these read GFPNVGKS, FTTLK, DIPG, NKSD, and SAA. Positions 172 and 192 each coordinate Mg(2+). Residues 345 to 428 form the OCT domain; sequence MYIPEEKRFT…LNDFEFEYLL (84 aa).

This sequence belongs to the TRAFAC class OBG-HflX-like GTPase superfamily. OBG GTPase family. As to quaternary structure, monomer. Mg(2+) serves as cofactor.

Its subcellular location is the cytoplasm. An essential GTPase which binds GTP, GDP and possibly (p)ppGpp with moderate affinity, with high nucleotide exchange rates and a fairly low GTP hydrolysis rate. Plays a role in control of the cell cycle, stress response, ribosome biogenesis and in those bacteria that undergo differentiation, in morphogenesis control. This chain is GTPase Obg, found in Clostridium botulinum (strain Eklund 17B / Type B).